Consider the following 331-residue polypeptide: Glycerol-3-phosphate dehydrogenase [NAD(P)+] (331 aa).

S11, F12, R32, and K106 together coordinate NADPH. The sn-glycerol 3-phosphate site is built by K106, G134, and S136. A138 contacts NADPH. K189, D242, S252, R253, and N254 together coordinate sn-glycerol 3-phosphate. K189 functions as the Proton acceptor in the catalytic mechanism. NADPH is bound at residue R253. NADPH-binding residues include V277 and E279.

Belongs to the NAD-dependent glycerol-3-phosphate dehydrogenase family.

The protein resides in the cytoplasm. The enzyme catalyses sn-glycerol 3-phosphate + NAD(+) = dihydroxyacetone phosphate + NADH + H(+). The catalysed reaction is sn-glycerol 3-phosphate + NADP(+) = dihydroxyacetone phosphate + NADPH + H(+). Its pathway is membrane lipid metabolism; glycerophospholipid metabolism. Catalyzes the reduction of the glycolytic intermediate dihydroxyacetone phosphate (DHAP) to sn-glycerol 3-phosphate (G3P), the key precursor for phospholipid synthesis. This Clostridium perfringens (strain ATCC 13124 / DSM 756 / JCM 1290 / NCIMB 6125 / NCTC 8237 / Type A) protein is Glycerol-3-phosphate dehydrogenase [NAD(P)+].